Reading from the N-terminus, the 163-residue chain is Nucleotide-binding protein Bcer98_0876 (163 aa).

Belongs to the YajQ family.

Nucleotide-binding protein. This is Nucleotide-binding protein Bcer98_0876 from Bacillus cytotoxicus (strain DSM 22905 / CIP 110041 / 391-98 / NVH 391-98).